We begin with the raw amino-acid sequence, 100 residues long: Urease subunit gamma (100 aa).

Belongs to the urease gamma subunit family. As to quaternary structure, heterotrimer of UreA (gamma), UreB (beta) and UreC (alpha) subunits. Three heterotrimers associate to form the active enzyme.

It is found in the cytoplasm. The enzyme catalyses urea + 2 H2O + H(+) = hydrogencarbonate + 2 NH4(+). The protein operates within nitrogen metabolism; urea degradation; CO(2) and NH(3) from urea (urease route): step 1/1. The sequence is that of Urease subunit gamma from Haemophilus influenzae (strain PittGG).